Consider the following 792-residue polypeptide: Endonuclease MutS2 (792 aa).

334-341 (GPNTGGKT) lines the ATP pocket. A Smr domain is found at 717-792 (INLIGKTTDE…DAGVTIATFK (76 aa)).

This sequence belongs to the DNA mismatch repair MutS family. MutS2 subfamily. In terms of assembly, homodimer. Binds to stalled ribosomes, contacting rRNA.

Endonuclease that is involved in the suppression of homologous recombination and thus may have a key role in the control of bacterial genetic diversity. In terms of biological role, acts as a ribosome collision sensor, splitting the ribosome into its 2 subunits. Detects stalled/collided 70S ribosomes which it binds and splits by an ATP-hydrolysis driven conformational change. Acts upstream of the ribosome quality control system (RQC), a ribosome-associated complex that mediates the extraction of incompletely synthesized nascent chains from stalled ribosomes and their subsequent degradation. Probably generates substrates for RQC. This Agathobacter rectalis (strain ATCC 33656 / DSM 3377 / JCM 17463 / KCTC 5835 / VPI 0990) (Eubacterium rectale) protein is Endonuclease MutS2.